Here is a 357-residue protein sequence, read N- to C-terminus: Protein BUR2 (357 aa).

Belongs to the BUR kinase complex.

It localises to the nucleus. Its function is as follows. Component of the BUR kinase complex involved in transcription regulation. This complex phosphorylates the UBC2/RAD6 ubiquitin-conjugating enzyme (E2), leading to monoubiquitination of histone H2B and the silencing of telomeric-associated genes. Also required for histone H3 methylation. Necessary for the recovery from pheromone-induced growth arrest in the cell cycle G1 phase. The kinase activity of the complex requires the presence of BUR2. Overexpression of BUR2 interferes with mitotic chromosome segregation. The chain is Protein BUR2 (BUR2) from Candida glabrata (strain ATCC 2001 / BCRC 20586 / JCM 3761 / NBRC 0622 / NRRL Y-65 / CBS 138) (Yeast).